Reading from the N-terminus, the 141-residue chain is Protein MGF 100-2L (141 aa).

This sequence belongs to the asfivirus MGF 100 family.

In terms of biological role, plays a role in virus cell tropism, and may be required for efficient virus replication in macrophages. The protein is Protein MGF 100-2L of African swine fever virus (isolate Tick/Malawi/Lil 20-1/1983) (ASFV).